Consider the following 676-residue polypeptide: DNA ligase (676 aa).

Residues D42–D46, S91–L92, and E121 contribute to the NAD(+) site. The active-site N6-AMP-lysine intermediate is the K123. Residues R144, E178, K294, and K318 each contribute to the NAD(+) site. Residues C412, C415, C430, and C435 each coordinate Zn(2+). A BRCT domain is found at N596–K676.

It belongs to the NAD-dependent DNA ligase family. LigA subfamily. Requires Mg(2+) as cofactor. It depends on Mn(2+) as a cofactor.

The catalysed reaction is NAD(+) + (deoxyribonucleotide)n-3'-hydroxyl + 5'-phospho-(deoxyribonucleotide)m = (deoxyribonucleotide)n+m + AMP + beta-nicotinamide D-nucleotide.. DNA ligase that catalyzes the formation of phosphodiester linkages between 5'-phosphoryl and 3'-hydroxyl groups in double-stranded DNA using NAD as a coenzyme and as the energy source for the reaction. It is essential for DNA replication and repair of damaged DNA. This chain is DNA ligase, found in Levilactobacillus brevis (strain ATCC 367 / BCRC 12310 / CIP 105137 / JCM 1170 / LMG 11437 / NCIMB 947 / NCTC 947) (Lactobacillus brevis).